A 196-amino-acid chain; its full sequence is Peptide methionine sulfoxide reductase (196 aa).

Residues 1 to 14 (MEGNNSSSKSTTNP) show a composition bias toward polar residues. The segment at 1–23 (MEGNNSSSKSTTNPALDPDLDSP) is disordered.

This sequence belongs to the MsrA Met sulfoxide reductase family.

The catalysed reaction is L-methionyl-[protein] + [thioredoxin]-disulfide + H2O = L-methionyl-(S)-S-oxide-[protein] + [thioredoxin]-dithiol. The enzyme catalyses [thioredoxin]-disulfide + L-methionine + H2O = L-methionine (S)-S-oxide + [thioredoxin]-dithiol. Functionally, has an important function as a repair enzyme for proteins that have been inactivated by oxidation. Catalyzes the reversible oxidation-reduction of methionine sulfoxide in proteins to methionine. The polypeptide is Peptide methionine sulfoxide reductase (E4) (Solanum lycopersicum (Tomato)).